A 248-amino-acid polypeptide reads, in one-letter code: Ribonuclease PH (248 aa).

Phosphate is bound by residues arginine 86 and 124 to 126 (GTR).

It belongs to the RNase PH family. In terms of assembly, homohexameric ring arranged as a trimer of dimers.

The enzyme catalyses tRNA(n+1) + phosphate = tRNA(n) + a ribonucleoside 5'-diphosphate. In terms of biological role, phosphorolytic 3'-5' exoribonuclease that plays an important role in tRNA 3'-end maturation. Removes nucleotide residues following the 3'-CCA terminus of tRNAs; can also add nucleotides to the ends of RNA molecules by using nucleoside diphosphates as substrates, but this may not be physiologically important. Probably plays a role in initiation of 16S rRNA degradation (leading to ribosome degradation) during starvation. The protein is Ribonuclease PH of Listeria monocytogenes serotype 4b (strain CLIP80459).